The following is a 742-amino-acid chain: Two pore calcium channel protein 1 (742 aa).

A disordered region spans residues Met1–Lys37. Topologically, residues Met1–Ser82 are cytoplasmic. The chain crosses the membrane as a helical span at residues Phe83–Leu103. Topologically, residues Leu104–Ser140 are extracellular. A helical transmembrane segment spans residues Leu141–Tyr161. Residues Glu162–Lys176 are Cytoplasmic-facing. The chain crosses the membrane as a helical span at residues Ile177–Phe197. Over Arg198–Arg204 the chain is Extracellular. A helical; Voltage-sensor membrane pass occupies residues Val205–Ile226. A helical membrane pass occupies residues Gly227 to Ala247. Residues Tyr248–Lys258 lie on the Extracellular side of the membrane. Positions Thr259 to Val273 form an intramembrane region, pore-forming. At Leu274–Leu296 the chain is on the extracellular side. The helical transmembrane segment at Phe297 to Ile317 threads the bilayer. Topologically, residues Tyr318–Tyr446 are cytoplasmic. EF-hand domains follow at residues Ile335–Tyr370 and Thr376–Lys411. A helical transmembrane segment spans residues Ile447–Ile467. The Extracellular portion of the chain corresponds to Glu468–Glu480. A glycan (N-linked (GlcNAc...) asparagine) is linked at Asn469. The chain crosses the membrane as a helical span at residues Phe481–Gly501. The Cytoplasmic portion of the chain corresponds to Ala502 to Lys510. Residues Phe511–Ser531 form a helical membrane-spanning segment. Topologically, residues Lys532–Glu540 are extracellular. A helical; Voltage-sensor transmembrane segment spans residues Trp541 to Leu558. Residues Gln559 to Gly582 are Cytoplasmic-facing. Residues Ile583–Val603 traverse the membrane as a helical segment. The Extracellular segment spans residues Tyr604–Asp627. Residues Tyr628–Gly642 constitute an intramembrane region (pore-forming). At Asn643–Tyr663 the chain is on the extracellular side. A helical transmembrane segment spans residues Phe664–Leu684. Residues Glu685 to Ser742 lie on the Cytoplasmic side of the membrane.

It belongs to the calcium channel alpha-1 subunit (TC 1.A.1.11) family. Two pore calcium channel subfamily. Homodimer.

Its subcellular location is the membrane. With respect to regulation, inhibited by Al(3+). Functionally, functions as a voltage-gated inward-rectifying Ca(2+) channel (VDCC) across the plasma membrane that mediates sucrose-induced Ca(2+) influx in autotrophically grown leaf cells. Acts as the major ROS-responsive Ca(2+) channel and is the possible target of Al-dependent inhibition. Plays a regulatory role in defense responses. The chain is Two pore calcium channel protein 1 (TPC1) from Triticum aestivum (Wheat).